The primary structure comprises 162 residues: Regulator of sigma D (162 aa).

It belongs to the Rsd/AlgQ family. In terms of assembly, interacts with RpoD.

It localises to the cytoplasm. Its function is as follows. Binds RpoD and negatively regulates RpoD-mediated transcription activation by preventing the interaction between the primary sigma factor RpoD with the catalytic core of the RNA polymerase and with promoter DNA. May be involved in replacement of the RNA polymerase sigma subunit from RpoD to RpoS during the transition from exponential growth to the stationary phase. The protein is Regulator of sigma D of Salmonella agona (strain SL483).